A 146-amino-acid polypeptide reads, in one-letter code: Leghemoglobin Lb120-29 (146 aa).

A Globin domain is found at 2 to 146 (GFTDKQEALV…LASAIKKAMS (145 aa)). A nitrated tyrosine mark is found at Y24 and Y29. Residue S44 participates in heme b binding. Residue S44 is modified to Phosphoserine. Position 61 (H61) interacts with O2. The heme b site is built by K64, H93, and K96. Y134 is subject to Nitrated tyrosine.

Belongs to the plant globin family. Monomer. Post-translationally, nitrated in effective nodules and particularly in hypoxic conditions; this mechanism may play a protective role in the symbiosis by buffering toxic peroxynitrite NO(2)(-). Nitration level decrease during nodule senescence. In terms of processing, phosphorylation at Ser-44 disrupts the molecular environment of its porphyrin ring oxygen binding pocket, thus leading to a reduced oxygen consumption and to the delivery of oxygen O(2) to symbiosomes. Root nodules.

It localises to the cytoplasm. The protein resides in the cytosol. The protein localises to the nucleus. Functionally, leghemoglobin that reversibly binds oxygen O(2) through a pentacoordinated heme iron. In root nodules, facilitates the diffusion of oxygen to the bacteroids while preventing the bacterial nitrogenase from being inactivated by buffering dioxygen, nitric oxide and carbon monoxide, and promoting the formation of reactive oxygen species (ROS, e.g. H(2)O(2)). This role is essential for symbiotic nitrogen fixation (SNF). The chain is Leghemoglobin Lb120-29 from Pisum sativum (Garden pea).